The sequence spans 603 residues: Serine/threonine-protein kinase PLK1 (603 aa).

Residues 1–15 (MNAAAKAGKLARAPA) are compositionally biased toward low complexity. The tract at residues 1–32 (MNAAAKAGKLARAPADLGKGGVPGDAAPGAPG) is disordered. A Glycyl lysine isopeptide (Lys-Gly) (interchain with G-Cter in ubiquitin) cross-link involves residue Lys19. One can recognise a Protein kinase domain in the interval 53–305 (YVRGRFLGKG…IHELLNDEFF (253 aa)). ATP contacts are provided by residues 59–67 (LGKGGFAKC) and Lys82. A Phosphoserine modification is found at Ser103. Residue Glu131 coordinates ATP. Ser137 carries the post-translational modification Phosphoserine. Asp176 functions as the Proton acceptor in the catalytic mechanism. ATP is bound by residues 178-181 (KLGN) and Asp194. An activation loop region spans residues 194–221 (DFGLATKVEYEGERKKTLCGTPNYIAPE). Thr210 is subject to Phosphothreonine; by AURKA. Residue Thr214 is modified to Phosphothreonine. Ser269 and Ser335 each carry phosphoserine; by autocatalysis. The D-box that targets the protein for proteasomal degradation in anaphase signature appears at 337–340 (RKPL). A Glycyl lysine isopeptide (Lys-Gly) (interchain with G-Cter in SUMO2) cross-link involves residue Lys338. The disordered stretch occupies residues 338–361 (KPLTVLNKGVENPLPDRPREKEEP). Residues 351 to 361 (LPDRPREKEEP) show a composition bias toward basic and acidic residues. Phosphoserine occurs at positions 375 and 450. The POLO box 1 domain occupies 410 to 488 (WVSKWVDYSD…LNYFRNYMSE (79 aa)). A Glycyl lysine isopeptide (Lys-Gly) (interchain with G-Cter in ubiquitin) cross-link involves residue Lys492. Residues 493–507 (AGANITPREGDELAR) form a linker region. Position 498 is a phosphothreonine (Thr498). The POLO box 2 domain occupies 510–592 (YLRTWFRTRS…ARTMVDKLLS (83 aa)). Positions 538–540 (HTK) are important for interaction with phosphorylated proteins.

The protein belongs to the protein kinase superfamily. Ser/Thr protein kinase family. CDC5/Polo subfamily. Interacts with CEP170 and EVI5. Interacts and phosphorylates ERCC6L. Interacts with FAM29A. Interacts with SLX4/BTBD12 and TTDN1. Interacts with BUB1B. Interacts (via POLO-box domain) with the phosphorylated form of BUB1, CENPU and CDC25C. Interacts with isoform 3 of SGO1. Interacts with BORA, KIF2A and AURKA. Interacts with TOPORS and CYLD. Interacts with ECT2; the interaction is stimulated upon phosphorylation of ECT2 on 'Thr-444'. Interacts with PRC1. Interacts with KIF20A/MKLP2 (when phosphorylated), leading to the recruitment at the central spindle. Interacts (via POLO box domains) with PPP1R12A/MYPT1 (when previously phosphorylated by CDK1). Part of an astrin (SPAG5)-kinastrin (SKAP) complex containing KNSTRN, SPAG5, PLK1, DYNLL1 and SGO2. Interacts with BIRC6/bruce. Interacts with CDK1-phosphorylated FRY; this interaction occurs in mitotic cells, but not in interphase cells. FRY interaction facilitates AURKA-mediated PLK1 phosphorylation. Interacts with CDK1-phosphorylated DCTN6 during mitotic prometaphase; the interaction facilitates recruitment to kinetochores. Interacts with CEP68; the interaction phosphorylates CEP68. Interacts (via POLO-box domain) with DCTN1. Interacts with CEP20 in later G1, S, G2 and M phases of the cell cycle; this interaction recruits PLK1 to centrosomes, a step required for S phase progression. Interacts with HSF1; this interaction increases upon heat shock but does not modulate neither HSF1 homotrimerization nor DNA-binding activities. Interacts with HNRNPU; this interaction induces phosphorylation of HNRNPU in mitosis. Interacts (via its N-terminus) with RIOK2. Interacts with KLHL22. Interacts (via POLO box domains) with NEDD9/HEF1 (via C-terminus). Interacts (via RVxF motif) with FIRRM; regulates PLK1 kinase activity. Interacts with SKA3; the interaction promotes the stability of PLK1. Interacts with the MTMR3:MTMR4 heterooligomer; brings CEP55 and PLK1 together during early mitosis, regulating the phosphorylation of CEP55 by PLK1 and its recruitment to the midbody where it can mediate cell abscission. In terms of processing, catalytic activity is enhanced by phosphorylation of Thr-210. Phosphorylation at Thr-210 is first detected on centrosomes in the G2 phase of the cell cycle, peaks in prometaphase and gradually disappears from centrosomes during anaphase. Dephosphorylation at Thr-210 at centrosomes is probably mediated by protein phosphatase 1C (PP1C), via interaction with PPP1R12A/MYPT1. Autophosphorylation and phosphorylation of Ser-137 may not be significant for the activation of PLK1 during mitosis, but may enhance catalytic activity during recovery after DNA damage checkpoint. Phosphorylated in vitro by STK10. Post-translationally, ubiquitinated by the anaphase promoting complex/cyclosome (APC/C) in anaphase and following DNA damage, leading to its degradation by the proteasome. Ubiquitination is mediated via its interaction with FZR1/CDH1. Ubiquitination and subsequent degradation prevents entry into mitosis and is essential to maintain an efficient G2 DNA damage checkpoint. Monoubiquitination at Lys-492 by the BCR(KLHL22) ubiquitin ligase complex does not lead to degradation: it promotes PLK1 dissociation from phosphoreceptor proteins and subsequent removal from kinetochores, allowing silencing of the spindle assembly checkpoint (SAC) and chromosome segregation.

Its subcellular location is the nucleus. It is found in the chromosome. The protein resides in the centromere. It localises to the kinetochore. The protein localises to the cytoplasm. Its subcellular location is the cytoskeleton. It is found in the microtubule organizing center. The protein resides in the centrosome. It localises to the spindle. The protein localises to the midbody. It carries out the reaction L-seryl-[protein] + ATP = O-phospho-L-seryl-[protein] + ADP + H(+). The enzyme catalyses L-threonyl-[protein] + ATP = O-phospho-L-threonyl-[protein] + ADP + H(+). With respect to regulation, activated by phosphorylation of Thr-210 by AURKA; phosphorylation by AURKA is enhanced by BORA. Once activated, activity is stimulated by binding target proteins. Binding of target proteins has no effect on the non-activated kinase. Several inhibitors targeting PLKs are currently in development and are under investigation in a growing number of clinical trials, such as BI 2536, an ATP-competitive PLK1 inhibitor or BI 6727, a dihydropteridinone that specifically inhibits the catalytic activity of PLK1. In terms of biological role, serine/threonine-protein kinase that performs several important functions throughout M phase of the cell cycle, including the regulation of centrosome maturation and spindle assembly, the removal of cohesins from chromosome arms, the inactivation of anaphase-promoting complex/cyclosome (APC/C) inhibitors, and the regulation of mitotic exit and cytokinesis. Polo-like kinase proteins act by binding and phosphorylating proteins that are already phosphorylated on a specific motif recognized by the POLO box domains. Phosphorylates BORA, BUB1B/BUBR1, CCNB1, CDC25C, CEP55, ECT2, ERCC6L, FBXO5/EMI1, FOXM1, KIF20A/MKLP2, CENPU, NEDD1, NINL, NPM1, NUDC, PKMYT1/MYT1, KIZ, PPP1R12A/MYPT1, PRC1, RACGAP1/CYK4, RHNO1, SGO1, STAG2/SA2, TEX14, TOPORS, p73/TP73, TPT1, WEE1 and HNRNPU. Plays a key role in centrosome functions and the assembly of bipolar spindles by phosphorylating KIZ, NEDD1 and NINL. NEDD1 phosphorylation promotes subsequent targeting of the gamma-tubulin ring complex (gTuRC) to the centrosome, an important step for spindle formation. Phosphorylation of NINL component of the centrosome leads to NINL dissociation from other centrosomal proteins. Involved in mitosis exit and cytokinesis by phosphorylating CEP55, ECT2, KIF20A/MKLP2, CENPU, PRC1 and RACGAP1. Recruited at the central spindle by phosphorylating and docking PRC1 and KIF20A/MKLP2; creates its own docking sites on PRC1 and KIF20A/MKLP2 by mediating phosphorylation of sites subsequently recognized by the POLO box domains. Phosphorylates RACGAP1, thereby creating a docking site for the Rho GTP exchange factor ECT2 that is essential for the cleavage furrow formation. Promotes the central spindle recruitment of ECT2. Plays a central role in G2/M transition of mitotic cell cycle by phosphorylating CCNB1, CDC25C, FOXM1, CENPU, PKMYT1/MYT1, PPP1R12A/MYPT1 and WEE1. Part of a regulatory circuit that promotes the activation of CDK1 by phosphorylating the positive regulator CDC25C and inhibiting the negative regulators WEE1 and PKMYT1/MYT1. Also acts by mediating phosphorylation of cyclin-B1 (CCNB1) on centrosomes in prophase. Phosphorylates FOXM1, a key mitotic transcription regulator, leading to enhance FOXM1 transcriptional activity. Involved in kinetochore functions and sister chromatid cohesion by phosphorylating BUB1B/BUBR1, FBXO5/EMI1 and STAG2/SA2. PLK1 is high on non-attached kinetochores suggesting a role of PLK1 in kinetochore attachment or in spindle assembly checkpoint (SAC) regulation. Required for kinetochore localization of BUB1B. Regulates the dissociation of cohesin from chromosomes by phosphorylating cohesin subunits such as STAG2/SA2. Phosphorylates SGO1: required for spindle pole localization of isoform 3 of SGO1 and plays a role in regulating its centriole cohesion function. Mediates phosphorylation of FBXO5/EMI1, a negative regulator of the APC/C complex during prophase, leading to FBXO5/EMI1 ubiquitination and degradation by the proteasome. Acts as a negative regulator of p53 family members: phosphorylates TOPORS, leading to inhibit the sumoylation of p53/TP53 and simultaneously enhance the ubiquitination and subsequent degradation of p53/TP53. Phosphorylates the transactivation domain of the transcription factor p73/TP73, leading to inhibit p73/TP73-mediated transcriptional activation and pro-apoptotic functions. Phosphorylates BORA, and thereby promotes the degradation of BORA. Contributes to the regulation of AURKA function. Also required for recovery after DNA damage checkpoint and entry into mitosis. Phosphorylates MISP, leading to stabilization of cortical and astral microtubule attachments required for proper spindle positioning. Together with MEIKIN, acts as a regulator of kinetochore function during meiosis I: required both for mono-orientation of kinetochores on sister chromosomes and protection of centromeric cohesin from separase-mediated cleavage. Phosphorylates CEP68 and is required for its degradation. Regulates nuclear envelope breakdown during prophase by phosphorylating DCTN1 resulting in its localization in the nuclear envelope. Phosphorylates the heat shock transcription factor HSF1, promoting HSF1 nuclear translocation upon heat shock. Phosphorylates HSF1 also in the early mitotic period; this phosphorylation regulates HSF1 localization to the spindle pole, the recruitment of the SCF(BTRC) ubiquitin ligase complex induicing HSF1 degradation, and hence mitotic progression. Regulates mitotic progression by phosphorylating RIOK2. Through the phosphorylation of DZIP1 regulates the localization during mitosis of the BBSome, a ciliary protein complex involved in cilium biogenesis. Regulates DNA repair during mitosis by mediating phosphorylation of POLQ and RHNO1, thereby promoting POLQ recruitment to DNA damage sites. Phosphorylates ATXN10 which may play a role in the regulation of cytokinesis and may stimulate the proteasome-mediated degradation of ATXN10. This Rattus norvegicus (Rat) protein is Serine/threonine-protein kinase PLK1 (Plk1).